The chain runs to 741 residues: NAD(P)H-quinone oxidoreductase subunit 5, chloroplastic (741 aa).

Transmembrane regions (helical) follow at residues 9–29, 40–60, 89–109, 125–145, 147–167, 185–205, 219–239, 258–278, 284–304, 327–347, 354–374, 396–416, 425–445, 549–569, 605–625, and 721–741; these read WIIP…LLLF, WAFQ…NLSI, IDPL…MVLI, FAYM…SNLI, IYIF…FWFT, GDFG…SFEF, NEVN…GAIA, TPIS…FLVA, FIVI…TVFF, LGYM…FHLI, ALLF…VGYC, NSFL…CFWS, WLYS…TAFY, LFPI…GIPF, VFSV…YKPV, and YLFF…FLNF.

This sequence belongs to the complex I subunit 5 family. NDH is composed of at least 16 different subunits, 5 of which are encoded in the nucleus.

Its subcellular location is the plastid. It localises to the chloroplast thylakoid membrane. The enzyme catalyses a plastoquinone + NADH + (n+1) H(+)(in) = a plastoquinol + NAD(+) + n H(+)(out). The catalysed reaction is a plastoquinone + NADPH + (n+1) H(+)(in) = a plastoquinol + NADP(+) + n H(+)(out). Functionally, NDH shuttles electrons from NAD(P)H:plastoquinone, via FMN and iron-sulfur (Fe-S) centers, to quinones in the photosynthetic chain and possibly in a chloroplast respiratory chain. The immediate electron acceptor for the enzyme in this species is believed to be plastoquinone. Couples the redox reaction to proton translocation, and thus conserves the redox energy in a proton gradient. This Flaveria ramosissima (Yellowtops) protein is NAD(P)H-quinone oxidoreductase subunit 5, chloroplastic (ndhF).